The sequence spans 154 residues: Myoglobin (154 aa).

One can recognise a Globin domain in the interval 2-148 (VLSEGEWQLV…FRKDIAAKYK (147 aa)). Serine 4 is modified (phosphoserine). Position 65 (histidine 65) interacts with nitrite. Histidine 65 is a binding site for O2. Phosphothreonine is present on threonine 68. Histidine 94 contacts heme b.

This sequence belongs to the globin family. In terms of assembly, monomeric.

It is found in the cytoplasm. The protein localises to the sarcoplasm. It catalyses the reaction Fe(III)-heme b-[protein] + nitric oxide + H2O = Fe(II)-heme b-[protein] + nitrite + 2 H(+). The catalysed reaction is H2O2 + AH2 = A + 2 H2O. Functionally, monomeric heme protein which primary function is to store oxygen and facilitate its diffusion within muscle tissues. Reversibly binds oxygen through a pentacoordinated heme iron and enables its timely and efficient release as needed during periods of heightened demand. Depending on the oxidative conditions of tissues and cells, and in addition to its ability to bind oxygen, it also has a nitrite reductase activity whereby it regulates the production of bioactive nitric oxide. Under stress conditions, like hypoxia and anoxia, it also protects cells against reactive oxygen species thanks to its pseudoperoxidase activity. The chain is Myoglobin (MB) from Kogia breviceps (Pygmy sperm whale).